The sequence spans 189 residues: MVSAISTVLYVLIPFLVFLFRRIDARAIMVSGIAFYPFHLFLPMIVVFITGIPLILKSKGVYITLDGIGMENPDFSDALLVIDTMLFQIMLLQPFITLIYSRGVDLKIQDVRLILGTPLRRRILSSLFAFVIAGIALPEIVLLNFSGILHVDYLFFVHLIASSVFANLLVPSDSSKTSLVVFYLWVYIS.

The next 5 membrane-spanning stretches (helical) occupy residues 4–21, 34–56, 79–101, 122–144, and 148–170; these read AIST…FLFR, AFYP…PLIL, LLVI…LIYS, RILS…VLLN, and ILHV…NLLV.

It localises to the cell membrane. This is an uncharacterized protein from Archaeoglobus fulgidus (strain ATCC 49558 / DSM 4304 / JCM 9628 / NBRC 100126 / VC-16).